A 317-amino-acid polypeptide reads, in one-letter code: tRNA-cytidine(32) 2-sulfurtransferase (317 aa).

The disordered stretch occupies residues 1–29; it reads MNTANNTLPTAADWAGEDGAPDAADTRKI. The PP-loop motif motif lies at 65 to 70; the sequence is SGGKDS. [4Fe-4S] cluster-binding residues include Cys140, Cys143, and Cys231.

It belongs to the TtcA family. In terms of assembly, homodimer. Mg(2+) serves as cofactor. Requires [4Fe-4S] cluster as cofactor.

Its subcellular location is the cytoplasm. The catalysed reaction is cytidine(32) in tRNA + S-sulfanyl-L-cysteinyl-[cysteine desulfurase] + AH2 + ATP = 2-thiocytidine(32) in tRNA + L-cysteinyl-[cysteine desulfurase] + A + AMP + diphosphate + H(+). Its pathway is tRNA modification. Catalyzes the ATP-dependent 2-thiolation of cytidine in position 32 of tRNA, to form 2-thiocytidine (s(2)C32). The sulfur atoms are provided by the cysteine/cysteine desulfurase (IscS) system. This Acidovorax ebreus (strain TPSY) (Diaphorobacter sp. (strain TPSY)) protein is tRNA-cytidine(32) 2-sulfurtransferase.